The primary structure comprises 440 residues: Chromosome partition protein MukF (440 aa).

The segment at 208 to 236 (LSETSGTLRELQDTLEAAGDKLQANLLRI) is leucine-zipper.

This sequence belongs to the MukF family. In terms of assembly, interacts, and probably forms a ternary complex, with MukE and MukB via its C-terminal region. The complex formation is stimulated by calcium or magnesium. It is required for an interaction between MukE and MukB.

It is found in the cytoplasm. It localises to the nucleoid. Involved in chromosome condensation, segregation and cell cycle progression. May participate in facilitating chromosome segregation by condensation DNA from both sides of a centrally located replisome during cell division. Not required for mini-F plasmid partitioning. Probably acts via its interaction with MukB and MukE. Overexpression results in anucleate cells. It has a calcium binding activity. The sequence is that of Chromosome partition protein MukF from Escherichia fergusonii (strain ATCC 35469 / DSM 13698 / CCUG 18766 / IAM 14443 / JCM 21226 / LMG 7866 / NBRC 102419 / NCTC 12128 / CDC 0568-73).